Consider the following 876-residue polypeptide: MATERYNPRDAEPRWQQKWNEDKVFETDNADPREKYYVLEMFPYPSGRIHMGHVRNYAMGDVVARYKRARGYNVLHPMGWDAFGMPAENAAMERGVHPASWTYQNIASMKAQLKAMGLSLDWSREFATCDVEYYQHQQHLFLDFLEKGLVYRKQSKVNWDPVDNTVLANEQVIDGRGWRSGALVEQRELTQWFFKITDFSQDLLDALDTLDQWPEKVRLMQKNWIGRSEGLTVRWEIVPETAPAGETEITVYTTRPDTLFGASFLAIAADHPLAKDAAAKNVEIEAFCEECRRAGTSLAALETAEKKGLDTGIRVRHPLDPTWELPVYIANFVLMDYGTGAIFGCPSGDQRDLDFARKYGLPVVAVVMPSDGDAASFAVGDTAYDGDGVMINSRFLDGKTTEEAFNIVADRLSAASLGNTPVAERKVNFRLRDWGISRQRYWGCPIPVIHCDACGVVPVPKTDLPVKLPEDVTFDQPGNPLDRHPTWRHVTCPHCGKDARRETDTMDTFVDSSWYFTRFTAPWEAKPTDPEAANRWLPVDQYIGGIEHAILHLLYSRFFTRAMRETGHVAASEPFKGLFTQGMVVHETYSRKAGAGREWVAPADIRIEEIDGKRRALLLATGEEVAIGSIEKMSKSKKNVVDPDDIIASYGADTARFFVLSDSPPERDVIWSEAGVEGAHRFTQRLWRLISEAAGVLSTVAAAPASEGEALAISQAAHKTLKAVQNDYDKLWFNKAVARIYELVNALAAPLTKVAAGEGDIAYRAAVRDAAEILIQLVAPMTPHLAEECWATLGNTGLLARTGWPRFVEALVVENDVVLPVQINGKKRAELTISRDADQNAVTDAVLELDAVKNVLNGQAPKKIIVVPQRIVNIVV.

The 'HIGH' region motif lies at P43–H53. The short motif at K632–S636 is the 'KMSKS' region element. K635 is a binding site for ATP.

This sequence belongs to the class-I aminoacyl-tRNA synthetase family.

Its subcellular location is the cytoplasm. The enzyme catalyses tRNA(Leu) + L-leucine + ATP = L-leucyl-tRNA(Leu) + AMP + diphosphate. In Rhizobium etli (strain CIAT 652), this protein is Leucine--tRNA ligase.